Reading from the N-terminus, the 73-residue chain is Omega-conotoxin GVIA (73 aa).

Residues 1-22 form the signal peptide; it reads MKLTCVVIVAVLLLTACQLITA. A propeptide spanning residues 23-45 is cleaved from the precursor; sequence DDSRGTQKHRALGSTTELSLSTR. 3 disulfides stabilise this stretch: Cys-46–Cys-61, Cys-53–Cys-64, and Cys-60–Cys-71. Pro-49, Pro-55, and Pro-66 each carry 4-hydroxyproline. Residue Tyr-72 is modified to Tyrosine amide; in form omega-conotoxin GVIA.

This sequence belongs to the conotoxin O1 superfamily. Expressed by the venom duct.

It is found in the secreted. Its function is as follows. Omega-conotoxins act at presynaptic membranes, they bind and block voltage-gated calcium channels (Cav). This toxin blocks N-type calcium channels (Cav2.2/CACNA1B) with a high potency (it displaces [125I]GVIA with an IC(50)=3.7-38 pM). This is Omega-conotoxin GVIA from Conus geographus (Geography cone).